Reading from the N-terminus, the 655-residue chain is FYVE, RhoGEF and PH domain-containing protein 2 (655 aa).

Phosphoserine is present on residues Ser10, Ser39, and Ser47. 2 disordered regions span residues 21 to 52 and 84 to 103; these read NRTPGEAPGSHSLEDQPHSPEHQLSLSPEPWE and WRRSCQPGVSPGPETQEPEE. Positions 32–41 are enriched in basic and acidic residues; that stretch reads SLEDQPHSPE. One can recognise a DH domain in the interval 102 to 290; it reads EEKRVVRELL…FSAAQHSNAA (189 aa). Residues 319–418 form the PH 1 domain; that stretch reads TLLREGPVLK…WMQACQAAID (100 aa). Residues 458 to 518 form an FYVE-type zinc finger; sequence DKMVTMCMRC…VCLTCYTFLT (61 aa). Zn(2+) contacts are provided by Cys464, Cys467, Cys481, Cys484, Cys489, Cys492, Cys510, and Cys513. The PH 2 domain occupies 544-641; it reads QSLVCSFLQL…WVTAIKRAAS (98 aa). At Thr644 the chain carries Phosphothreonine. Ser654 is modified (phosphoserine).

Lymph node, spleen, B-lymphocytes and macrophages (at protein level). Expressed at high levels in lymph node, spleen, B-lymphocytes and bone marrow macrophages. Expressed at lower levels in mature bone marrow dendritic cells. In both immature and mature B-cells, expression is down-regulated by prior B-cell receptor signaling. Expression remains high in resting B and memory cells but declines upon differentiation into plasma cells.

The protein resides in the cytoplasm. Its subcellular location is the nucleus. The protein localises to the early endosome. It localises to the early endosome membrane. It is found in the cell projection. The protein resides in the ruffle membrane. Its subcellular location is the cytoskeleton. Activates CDC42, a member of the Ras-like family of Rho- and Rac proteins, by exchanging bound GDP for free GTP. Activates JNK1 via CDC42 but not RAC1. Binds to phosphatidylinositol 4,5-bisphosphate, phosphatidylinositol 3,4,5-trisphosphate, phosphatidylinositol 5-monophosphate, phosphatidylinositol 4-monophosphate and phosphatidylinositol 3-monophosphate. This is FYVE, RhoGEF and PH domain-containing protein 2 (Fgd2) from Mus musculus (Mouse).